The sequence spans 248 residues: Mannose-binding protein C (248 aa).

The signal sequence occupies residues 1–20; sequence MSLFPSLPLLLLSVVATSYS. Positions 42–99 constitute a Collagen-like domain; it reads GINGFPGKDGRDGTKGEKGEPGQGLRGLQGPPGKLGPPGNPGPSGSPGPKGQKGDPGE. Residues 43–111 are disordered; it reads INGFPGKDGR…DCDSSLAASE (69 aa). P47 carries the 4-hydroxyproline modification. The segment covering 49–61 has biased composition (basic and acidic residues); that stretch reads KDGRDGTKGEKGE. P73, P79, P82, and P88 each carry 4-hydroxyproline. Positions 75 to 87 are enriched in pro residues; sequence KLGPPGNPGPSGS. Residues 112–130 adopt a coiled-coil conformation; it reads RKALQTEMAHIKKWLTFSL. Residues 134 to 245 form the C-type lectin domain; that stretch reads VGNKFFLTNG…CSSSHLALCE (112 aa). 2 disulfide bridges follow: C155–C244 and C222–C236.

In terms of assembly, oligomeric complex of 3 or more homotrimers. Interacts with MASP1 and MASP2. Interacts with MEP1A and MEP1B and may inhibit their catalytic activity. Post-translationally, hydroxylation on proline residues within the sequence motif, GXPG, is most likely to be 4-hydroxy as this fits the requirement for 4-hydroxylation in vertebrates.

It is found in the secreted. Its function is as follows. Calcium-dependent lectin involved in innate immune defense. Binds mannose, fucose and N-acetylglucosamine on different microorganisms and activates the lectin complement pathway. Binds to late apoptotic cells, as well as to apoptotic blebs and to necrotic cells, but not to early apoptotic cells, facilitating their uptake by macrophages. The chain is Mannose-binding protein C (MBL2) from Trachypithecus obscurus (Dusky leaf-monkey).